Consider the following 381-residue polypeptide: Penicillin-binding protein 4 (381 aa).

Residue Ser60 is the Acyl-ester intermediate of the active site. A helical transmembrane segment spans residues 271 to 291 (VAGCLDTWSFMATGWGHGWAL). 299 to 308 (GYGHDGASGG) is an NAD(+) binding site. Residues 315–340 (VVPGSGVVAALLTNGGVATSFFTDLF) form a helical membrane-spanning segment.

It belongs to the beta-lactamase family.

It localises to the cell membrane. In terms of biological role, involved in cell wall biosynthesis and may also act as a sensor of external penicillins. The protein is Penicillin-binding protein 4 (pbp) of Amycolatopsis lactamdurans (Nocardia lactamdurans).